The chain runs to 184 residues: NADH-quinone oxidoreductase subunit B 1 (184 aa).

Positions 37, 38, 103, and 132 each coordinate [4Fe-4S] cluster.

It belongs to the complex I 20 kDa subunit family. In terms of assembly, NDH-1 is composed of 14 different subunits. Subunits NuoB, C, D, E, F, and G constitute the peripheral sector of the complex. [4Fe-4S] cluster serves as cofactor.

It localises to the cell membrane. The catalysed reaction is a quinone + NADH + 5 H(+)(in) = a quinol + NAD(+) + 4 H(+)(out). NDH-1 shuttles electrons from NADH, via FMN and iron-sulfur (Fe-S) centers, to quinones in the respiratory chain. The immediate electron acceptor for the enzyme in this species is believed to be a menaquinone. Couples the redox reaction to proton translocation (for every two electrons transferred, four hydrogen ions are translocated across the cytoplasmic membrane), and thus conserves the redox energy in a proton gradient. This is NADH-quinone oxidoreductase subunit B 1 from Streptomyces coelicolor (strain ATCC BAA-471 / A3(2) / M145).